Reading from the N-terminus, the 142-residue chain is MFQGASSLNLDAKGRMTIPSRHRDALLLQCEGRVTLTKHPHGCLLFFPRPVWESHREQIAAWPMSARAWQRIFLGNASDVEMDGAGRILIAPELRSAVGMTRDVMLLGMGSHFEIWDATKLAESEAAAVANGMPDVLNDFSF.

SpoVT-AbrB domains are found at residues 5–51 and 77–120; these read ASSL…PRPV and ASDV…DATK.

This sequence belongs to the MraZ family. Forms oligomers.

Its subcellular location is the cytoplasm. It localises to the nucleoid. The protein is Transcriptional regulator MraZ of Janthinobacterium sp. (strain Marseille) (Minibacterium massiliensis).